A 115-amino-acid chain; its full sequence is MATGGTVRPAEEPEEEEEEEDEAVEEEEEEDYTFLPLVHDIIKCMDKDSQDVYQELNELKSKFQAMRKLVGNMPGIDMSPEEQQRHLQSLREQVQTKSELLQKYKSLCMFEIPKE.

A disordered region spans residues 1-31 (MATGGTVRPAEEPEEEEEEEDEAVEEEEEED). Over residues 12–31 (EPEEEEEEEDEAVEEEEEED) the composition is skewed to acidic residues. Residues 31-107 (DYTFLPLVHD…SELLQKYKSL (77 aa)) adopt a coiled-coil conformation.

It belongs to the Mediator complex subunit 9 family. As to quaternary structure, component of the Mediator complex.

It is found in the nucleus. In terms of biological role, component of the Mediator complex, a coactivator involved in the regulated transcription of nearly all RNA polymerase II-dependent genes. Mediator functions as a bridge to convey information from gene-specific regulatory proteins to the basal RNA polymerase II transcription machinery. Mediator is recruited to promoters by direct interactions with regulatory proteins and serves as a scaffold for the assembly of a functional preinitiation complex with RNA polymerase II and the general transcription factors. In Xenopus laevis (African clawed frog), this protein is Mediator of RNA polymerase II transcription subunit 9 (med9).